The primary structure comprises 355 residues: UDP-glucose 4-epimerase uge1 (355 aa).

An NAD(+)-binding site is contributed by 8–39; the sequence is TVLVTGGAGYIGSHTCVVLLEKGYDVVIVDNL.

It belongs to the NAD(P)-dependent epimerase/dehydratase family. NAD(+) is required as a cofactor.

The catalysed reaction is UDP-alpha-D-glucose = UDP-alpha-D-galactose. It participates in carbohydrate metabolism; galactose metabolism. Major UDP-glucose/-galactose 4-epimerase under glucose-rich conditions involved in protein galactosylation. The chain is UDP-glucose 4-epimerase uge1 (uge1) from Schizosaccharomyces pombe (strain 972 / ATCC 24843) (Fission yeast).